A 637-amino-acid polypeptide reads, in one-letter code: Phosphomethylpyrimidine synthase (637 aa).

Substrate contacts are provided by residues Asn242, Met271, Tyr300, His336, Ser356–Gly358, Asp397–Arg400, and Glu436. His440 provides a ligand contact to Zn(2+). Tyr463 is a binding site for substrate. Residue His504 participates in Zn(2+) binding. 3 residues coordinate [4Fe-4S] cluster: Cys584, Cys587, and Cys592.

This sequence belongs to the ThiC family. As to quaternary structure, homodimer. [4Fe-4S] cluster serves as cofactor.

The enzyme catalyses 5-amino-1-(5-phospho-beta-D-ribosyl)imidazole + S-adenosyl-L-methionine = 4-amino-2-methyl-5-(phosphooxymethyl)pyrimidine + CO + 5'-deoxyadenosine + formate + L-methionine + 3 H(+). It participates in cofactor biosynthesis; thiamine diphosphate biosynthesis. Catalyzes the synthesis of the hydroxymethylpyrimidine phosphate (HMP-P) moiety of thiamine from aminoimidazole ribotide (AIR) in a radical S-adenosyl-L-methionine (SAM)-dependent reaction. In Janthinobacterium sp. (strain Marseille) (Minibacterium massiliensis), this protein is Phosphomethylpyrimidine synthase.